A 102-amino-acid polypeptide reads, in one-letter code: NADH-quinone oxidoreductase subunit K (102 aa).

3 helical membrane-spanning segments follow: residues 6–26 (MEHGLALSGVLFSLGLIGLMV), 30–50 (ILFVLMSLEVMMNAAALAFVV), and 62–82 (IMFILVITLAAAEASIGLAIL).

It belongs to the complex I subunit 4L family. NDH-1 is composed of 13 different subunits. Subunits NuoA, H, J, K, L, M, N constitute the membrane sector of the complex.

Its subcellular location is the cell inner membrane. The catalysed reaction is a quinone + NADH + 5 H(+)(in) = a quinol + NAD(+) + 4 H(+)(out). Functionally, NDH-1 shuttles electrons from NADH, via FMN and iron-sulfur (Fe-S) centers, to quinones in the respiratory chain. The immediate electron acceptor for the enzyme in this species is believed to be ubiquinone. Couples the redox reaction to proton translocation (for every two electrons transferred, four hydrogen ions are translocated across the cytoplasmic membrane), and thus conserves the redox energy in a proton gradient. The polypeptide is NADH-quinone oxidoreductase subunit K (Azotobacter vinelandii (strain DJ / ATCC BAA-1303)).